Consider the following 160-residue polypeptide: Oocyte-secreted protein 4B (160 aa).

The signal sequence occupies residues 1–13 (MKTSVLLAITAMC).

The protein belongs to the PLAC1 family.

The protein localises to the secreted. The chain is Oocyte-secreted protein 4B from Homo sapiens (Human).